The sequence spans 193 residues: Probable GTP-binding protein EngB (193 aa).

An EngB-type G domain is found at 19-188 (SVKEVCFMGR…HKQIFELFKA (170 aa)). Residues 27–34 (GRSNVGKS), 53–57 (GRTQL), 70–73 (DLPG), 136–139 (NKFD), and 167–169 (VSA) each bind GTP. Residues serine 34 and threonine 55 each contribute to the Mg(2+) site.

This sequence belongs to the TRAFAC class TrmE-Era-EngA-EngB-Septin-like GTPase superfamily. EngB GTPase family. Requires Mg(2+) as cofactor.

Its function is as follows. Necessary for normal cell division and for the maintenance of normal septation. This chain is Probable GTP-binding protein EngB, found in Mycoplasma pneumoniae (strain ATCC 29342 / M129 / Subtype 1) (Mycoplasmoides pneumoniae).